The sequence spans 362 residues: 2-oxoglutarate-dependent dioxygenase lolO2 (362 aa).

A Fe2OG dioxygenase domain is found at 199–312 (TWNYFLGQPV…RYSLVFFGHL (114 aa)). His-222, Asp-224, and His-280 together coordinate Fe cation. Arg-303 contributes to the 2-oxoglutarate binding site.

The protein belongs to the iron/ascorbate-dependent oxidoreductase family. Fe(2+) serves as cofactor.

The protein operates within alkaloid biosynthesis. Its function is as follows. 2-oxoglutarate-dependent dioxygenase; part of the gene cluster that mediates the biosynthesis of loline alkaloids, potent insecticidal agents composed of a pyrrolizidine ring system and an uncommon ether bridge linking carbons 2 and 7. Lolines are structurally differentiated by the various modifications of the L-amino group and include norloline, loline, N-methylloline, N-acetylloline, N-acetylnorloline, and N-formylloline. The first committed step is the condensation of O-acetyl-L-homoserine (derived from L-aspartic acid) and L-proline, probably catalyzed by the gamma-type pyridoxal 5'-phosphate(PLP)-dependent enzyme lolC, to give the diamino diacid, NACPP. Ensuing cyclization, decarboxylation, and acetylation steps yield 1-exo-acetamidopyrrolizidine (AcAP). LolO is required for installation of the ether bridge upon the pathway intermediate, 1-exo-acetamidopyrrolizidine (AcAP). In sequential 2-oxoglutarate- and O(2)-consuming steps, lolO removes hydrogens from C2 and C7 of AcAP to form both carbon-oxygen bonds in N-acetylnorloline (NANL), the precursor to all other lolines. The enzymes lolD, lolE, lolF and lolT have also been proposed to be involved in the ether-bridge installation. Further processing of the exocyclic moiety of NANL by fungal N-acetamidase (LolN), methyltransferase (LolM), and cytochrome P450 (LolP) enzymes, with occasional involvement of a plant acetyltransferase, generates the other known lolines. LolN transforms NANL to norlonine which is monomethylated and dimethylated to respectively lonine and N-methyllonine (NML) by lolM. LolP catalyzes hydroxylation of the methyl group in N-methylloline (NML) and further oxygenation to N-formylloline (NFL). A plant acetyltransferase is responsible for the acetylation of loline to form N-acetylloline (NAL). LolA might interact with aspartate kinase to prevent feedback inhibition of its activity by these end products and thereby promote production of L-homoserine from L-aspartate. The sequence is that of 2-oxoglutarate-dependent dioxygenase lolO2 from Epichloe uncinata (Endophyte fungus).